The primary structure comprises 401 residues: Argininosuccinate synthase (401 aa).

8–16 (AYSGGLDTS) is an ATP binding site. Residues Tyr86 and Ser91 each contribute to the L-citrulline site. Gly116 provides a ligand contact to ATP. L-aspartate is bound by residues Thr118, Asn122, and Asp123. Asn122 is an L-citrulline binding site. Arg126, Ser175, Ser184, Glu260, and Tyr272 together coordinate L-citrulline.

This sequence belongs to the argininosuccinate synthase family. Type 1 subfamily. As to quaternary structure, homotetramer.

It localises to the cytoplasm. It catalyses the reaction L-citrulline + L-aspartate + ATP = 2-(N(omega)-L-arginino)succinate + AMP + diphosphate + H(+). It participates in amino-acid biosynthesis; L-arginine biosynthesis; L-arginine from L-ornithine and carbamoyl phosphate: step 2/3. In Clostridium kluyveri (strain ATCC 8527 / DSM 555 / NBRC 12016 / NCIMB 10680 / K1), this protein is Argininosuccinate synthase.